The following is a 142-amino-acid chain: MRNFDLSPLMRQWIGFDKLANALQNAGEGQSFPPYNIEKSDDNHYRITLALAGFRQEDLEIQLEGTRLSVKGTPEQPKEEKKWLHQGLMNQPFSLSFTLAENMEVSGATFVNGLLHIDLIRNEPEPIAAQRIAISERPALNS.

One can recognise a sHSP domain in the interval Ala-26–Arg-137.

This sequence belongs to the small heat shock protein (HSP20) family. As to quaternary structure, homodimer. Forms homomultimers of about 100-150 subunits at optimal growth temperatures. Conformation changes to oligomers at high temperatures or high ionic concentrations. The decrease in size of the multimers is accompanied by an increase in chaperone activity.

The protein resides in the cytoplasm. Functionally, associates with aggregated proteins, together with IbpA, to stabilize and protect them from irreversible denaturation and extensive proteolysis during heat shock and oxidative stress. Aggregated proteins bound to the IbpAB complex are more efficiently refolded and reactivated by the ATP-dependent chaperone systems ClpB and DnaK/DnaJ/GrpE. Its activity is ATP-independent. This is Small heat shock protein IbpB from Shigella boydii serotype 18 (strain CDC 3083-94 / BS512).